Reading from the N-terminus, the 198-residue chain is Thymidylate kinase (198 aa).

10-17 (GLDGSGKT) contributes to the ATP binding site.

The protein belongs to the thymidylate kinase family.

It carries out the reaction dTMP + ATP = dTDP + ADP. Functionally, phosphorylation of dTMP to form dTDP in both de novo and salvage pathways of dTTP synthesis. The polypeptide is Thymidylate kinase (Thermus thermophilus (strain ATCC BAA-163 / DSM 7039 / HB27)).